The sequence spans 277 residues: Ribosomal RNA small subunit methyltransferase A (277 aa).

S-adenosyl-L-methionine-binding residues include Asn24, Leu26, Gly51, Glu72, Asp96, and Asn123.

The protein belongs to the class I-like SAM-binding methyltransferase superfamily. rRNA adenine N(6)-methyltransferase family. RsmA subfamily.

It localises to the cytoplasm. The catalysed reaction is adenosine(1518)/adenosine(1519) in 16S rRNA + 4 S-adenosyl-L-methionine = N(6)-dimethyladenosine(1518)/N(6)-dimethyladenosine(1519) in 16S rRNA + 4 S-adenosyl-L-homocysteine + 4 H(+). Its function is as follows. Specifically dimethylates two adjacent adenosines (A1518 and A1519) in the loop of a conserved hairpin near the 3'-end of 16S rRNA in the 30S particle. May play a critical role in biogenesis of 30S subunits. In Ureaplasma parvum serovar 3 (strain ATCC 27815 / 27 / NCTC 11736), this protein is Ribosomal RNA small subunit methyltransferase A.